We begin with the raw amino-acid sequence, 80 residues long: UPF0248 protein M1425_2629 (80 aa).

It belongs to the UPF0248 family.

The chain is UPF0248 protein M1425_2629 from Saccharolobus islandicus (strain M.14.25 / Kamchatka #1) (Sulfolobus islandicus).